A 177-amino-acid chain; its full sequence is ATP synthase subunit delta (177 aa).

The protein belongs to the ATPase delta chain family. As to quaternary structure, F-type ATPases have 2 components, F(1) - the catalytic core - and F(0) - the membrane proton channel. F(1) has five subunits: alpha(3), beta(3), gamma(1), delta(1), epsilon(1). F(0) has three main subunits: a(1), b(2) and c(10-14). The alpha and beta chains form an alternating ring which encloses part of the gamma chain. F(1) is attached to F(0) by a central stalk formed by the gamma and epsilon chains, while a peripheral stalk is formed by the delta and b chains.

The protein localises to the cell inner membrane. In terms of biological role, f(1)F(0) ATP synthase produces ATP from ADP in the presence of a proton or sodium gradient. F-type ATPases consist of two structural domains, F(1) containing the extramembraneous catalytic core and F(0) containing the membrane proton channel, linked together by a central stalk and a peripheral stalk. During catalysis, ATP synthesis in the catalytic domain of F(1) is coupled via a rotary mechanism of the central stalk subunits to proton translocation. This protein is part of the stalk that links CF(0) to CF(1). It either transmits conformational changes from CF(0) to CF(1) or is implicated in proton conduction. The sequence is that of ATP synthase subunit delta from Aliivibrio fischeri (strain ATCC 700601 / ES114) (Vibrio fischeri).